Reading from the N-terminus, the 160-residue chain is NADH-quinone oxidoreductase subunit B (160 aa).

The [4Fe-4S] cluster site is built by Cys37, Cys38, Cys102, and Cys132.

It belongs to the complex I 20 kDa subunit family. As to quaternary structure, NDH-1 is composed of 14 different subunits. Subunits NuoB, C, D, E, F, and G constitute the peripheral sector of the complex. [4Fe-4S] cluster serves as cofactor.

The protein localises to the cell inner membrane. The catalysed reaction is a quinone + NADH + 5 H(+)(in) = a quinol + NAD(+) + 4 H(+)(out). Its function is as follows. NDH-1 shuttles electrons from NADH, via FMN and iron-sulfur (Fe-S) centers, to quinones in the respiratory chain. Couples the redox reaction to proton translocation (for every two electrons transferred, four hydrogen ions are translocated across the cytoplasmic membrane), and thus conserves the redox energy in a proton gradient. The protein is NADH-quinone oxidoreductase subunit B of Cupriavidus pinatubonensis (strain JMP 134 / LMG 1197) (Cupriavidus necator (strain JMP 134)).